Reading from the N-terminus, the 707-residue chain is Casein kinase 1-like protein HD16 (707 aa).

Residues 19 to 67 (YDVQDADPAASPVSPAPRGRTGRRGGAAAGRGNKTVAEGGGRKALKPRG) are disordered. A compositionally biased stretch (low complexity) spans 24–37 (ADPAASPVSPAPRG). The Protein kinase domain maps to 147–425 (YITDRKLGKG…KLISLFDGLI (279 aa)). ATP is bound by residues 153 to 161 (LGKGGFGQV) and Lys184. Asp276 functions as the Proton acceptor in the catalytic mechanism.

Belongs to the protein kinase superfamily. CK1 Ser/Thr protein kinase family. Casein kinase I subfamily. Monomer. Interacts with GHD7 (via C-terminus). Interacts with SLR1. Autophosphorylated. In terms of tissue distribution, expressed in roots, leaves and stems. Expressed in leaf vascular bundles, and proximal regions of the shoot and roots.

It is found in the cytoplasm. Its subcellular location is the nucleus. It catalyses the reaction L-seryl-[protein] + ATP = O-phospho-L-seryl-[protein] + ADP + H(+). The enzyme catalyses L-threonyl-[protein] + ATP = O-phospho-L-threonyl-[protein] + ADP + H(+). In terms of biological role, casein kinases are operationally defined by their preferential utilization of acidic proteins such as caseins as substrates. It can phosphorylate a large number of proteins. Can phosphorylate casein on threonine residues in vitro. Involved in the regulation of flowering time through gibberellin (GA) signaling, and independently of photoperiod. Phosphorylates the DELLA protein SLR1, stabilizing SLR1 protein and sustaining SLR1 activity as repressor of GA signaling. Required for normal development of male floral organs and grains, through modulation of GA signaling. Targeted and repressed by the homeobox protein HAZ1 during GA signaling. Can phosphorylate phosvitin and SLR1 in vitro. Is not required for clock function in either the presence or the absence of light signals. Involved in a genetic control pathway for photoperiodic flowering under long day (LD) conditions that includes HD1, GHD7, HD5 and HD2. Phosphorylates and activates GHD7, a major floral repressor under LD conditions. Phosphorylation of GHD7 enhances its function in the repression of EHD1, HD3A and HD3B/RFT1, and obviously delaying flowering. In Oryza sativa subsp. japonica (Rice), this protein is Casein kinase 1-like protein HD16.